A 209-amino-acid polypeptide reads, in one-letter code: MAPAQRPLLPLLLLLLPLRARNEDPARANADRYAVYWNRSNPRFQVSAVGDGGGYTVEVSINDYLDIYCPHYGAPLPPAERMERYILYMVNGEGHASCDHRQRGFKRWECNRPAAPGGPLKFSEKFQLFTPFSLGFEFRPGHEYYYISATPPNLVDRPCLRLKVYVRPTNETLYEAPEPIFTSNSSCSGLGGCHLFLTTVPVLWSLLGS.

The signal sequence occupies residues 1-20 (MAPAQRPLLPLLLLLLPLRA). The region spanning 30–170 (ADRYAVYWNR…RLKVYVRPTN (141 aa)) is the Ephrin RBD domain. Asn-38 is a glycosylation site (N-linked (GlcNAc...) asparagine). Intrachain disulfides connect Cys-69/Cys-110 and Cys-98/Cys-159. 2 N-linked (GlcNAc...) asparagine glycosylation sites follow: Asn-170 and Asn-184. Residue Asn-184 is the site of GPI-anchor amidated asparagine attachment. A propeptide spans 185–209 (SSCSGLGGCHLFLTTVPVLWSLLGS) (removed in mature form).

This sequence belongs to the ephrin family. Binds to the receptor tyrosine kinases EPHA3, EPHA4 and EPHA5. Interacts with EPHA8; activates EPHA8. In terms of tissue distribution, expressed in myogenic progenitor cells.

It is found in the cell membrane. Its function is as follows. Cell surface GPI-bound ligand for Eph receptors, a family of receptor tyrosine kinases which are crucial for migration, repulsion and adhesion during neuronal, vascular and epithelial development. Binds promiscuously Eph receptors residing on adjacent cells, leading to contact-dependent bidirectional signaling into neighboring cells. The signaling pathway downstream of the receptor is referred to as forward signaling while the signaling pathway downstream of the ephrin ligand is referred to as reverse signaling. With the EPHA2 receptor may play a role in bone remodeling through regulation of osteoclastogenesis and osteoblastogenesis. This chain is Ephrin-A2 (Efna2), found in Mus musculus (Mouse).